The sequence spans 642 residues: Glutamyl-tRNA(Gln) amidotransferase subunit E (642 aa).

This sequence belongs to the GatB/GatE family. GatE subfamily. In terms of assembly, heterodimer of GatD and GatE.

The catalysed reaction is L-glutamyl-tRNA(Gln) + L-glutamine + ATP + H2O = L-glutaminyl-tRNA(Gln) + L-glutamate + ADP + phosphate + H(+). Its function is as follows. Allows the formation of correctly charged Gln-tRNA(Gln) through the transamidation of misacylated Glu-tRNA(Gln) in organisms which lack glutaminyl-tRNA synthetase. The reaction takes place in the presence of glutamine and ATP through an activated gamma-phospho-Glu-tRNA(Gln). The GatDE system is specific for glutamate and does not act on aspartate. The chain is Glutamyl-tRNA(Gln) amidotransferase subunit E from Aeropyrum pernix (strain ATCC 700893 / DSM 11879 / JCM 9820 / NBRC 100138 / K1).